The following is a 114-amino-acid chain: T cell receptor beta variable 6-5 (114 aa).

An N-terminal signal peptide occupies residues 1 to 21 (MSIGLLCCAALSLLWAGPVNA). The 93-residue stretch at 22 to 114 (GVTQTPKFQV…TSVYFCASSY (93 aa)) folds into the Ig-like domain. C42 and C110 are joined by a disulfide. N84 is a glycosylation site (N-linked (GlcNAc...) asparagine).

As to quaternary structure, alpha-beta TR is a heterodimer composed of an alpha and beta chain; disulfide-linked. The alpha-beta TR is associated with the transmembrane signaling CD3 coreceptor proteins to form the TR-CD3 (TcR or TCR). The assembly of alpha-beta TR heterodimers with CD3 occurs in the endoplasmic reticulum where a single alpha-beta TR heterodimer associates with one CD3D-CD3E heterodimer, one CD3G-CD3E heterodimer and one CD247 homodimer forming a stable octameric structure. CD3D-CD3E and CD3G-CD3E heterodimers preferentially associate with TR alpha and TR beta chains, respectively. The association of the CD247 homodimer is the last step of TcR assembly in the endoplasmic reticulum and is required for transport to the cell surface.

The protein resides in the cell membrane. Functionally, v region of the variable domain of T cell receptor (TR) beta chain that participates in the antigen recognition. Alpha-beta T cell receptors are antigen specific receptors which are essential to the immune response and are present on the cell surface of T lymphocytes. Recognize peptide-major histocompatibility (MH) (pMH) complexes that are displayed by antigen presenting cells (APC), a prerequisite for efficient T cell adaptive immunity against pathogens. Binding of alpha-beta TR to pMH complex initiates TR-CD3 clustering on the cell surface and intracellular activation of LCK that phosphorylates the ITAM motifs of CD3G, CD3D, CD3E and CD247 enabling the recruitment of ZAP70. In turn ZAP70 phosphorylates LAT, which recruits numerous signaling molecules to form the LAT signalosome. The LAT signalosome propagates signal branching to three major signaling pathways, the calcium, the mitogen-activated protein kinase (MAPK) kinase and the nuclear factor NF-kappa-B (NF-kB) pathways, leading to the mobilization of transcription factors that are critical for gene expression and essential for T cell growth and differentiation. The T cell repertoire is generated in the thymus, by V-(D)-J rearrangement. This repertoire is then shaped by intrathymic selection events to generate a peripheral T cell pool of self-MH restricted, non-autoaggressive T cells. Post-thymic interaction of alpha-beta TR with the pMH complexes shapes TR structural and functional avidity. The protein is T cell receptor beta variable 6-5 of Homo sapiens (Human).